The primary structure comprises 419 residues: Gamma-glutamyl phosphate reductase (419 aa).

This sequence belongs to the gamma-glutamyl phosphate reductase family.

It is found in the cytoplasm. The catalysed reaction is L-glutamate 5-semialdehyde + phosphate + NADP(+) = L-glutamyl 5-phosphate + NADPH + H(+). It participates in amino-acid biosynthesis; L-proline biosynthesis; L-glutamate 5-semialdehyde from L-glutamate: step 2/2. Its function is as follows. Catalyzes the NADPH-dependent reduction of L-glutamate 5-phosphate into L-glutamate 5-semialdehyde and phosphate. The product spontaneously undergoes cyclization to form 1-pyrroline-5-carboxylate. In Marinomonas sp. (strain MWYL1), this protein is Gamma-glutamyl phosphate reductase.